Reading from the N-terminus, the 244-residue chain is Ureidoacrylate amidohydrolase RutB (244 aa).

Asp38 functions as the Proton acceptor in the catalytic mechanism. Lys147 is an active-site residue. Cys180 functions as the Nucleophile in the catalytic mechanism.

The protein belongs to the isochorismatase family. RutB subfamily.

It carries out the reaction (Z)-3-ureidoacrylate + H2O + H(+) = (Z)-3-aminoacrylate + NH4(+) + CO2. The catalysed reaction is (Z)-3-ureidoacrylate + H2O = (Z)-3-aminoacrylate + carbamate + H(+). It catalyses the reaction (Z)-2-methylureidoacrylate + H2O + H(+) = (Z)-2-methylaminoacrylate + NH4(+) + CO2. Functionally, hydrolyzes ureidoacrylate to form aminoacrylate and carbamate. The carbamate hydrolyzes spontaneously, thereby releasing one of the nitrogen atoms of the pyrimidine ring as ammonia and one of its carbon atoms as CO2. In Escherichia coli O6:H1 (strain CFT073 / ATCC 700928 / UPEC), this protein is Ureidoacrylate amidohydrolase RutB.